We begin with the raw amino-acid sequence, 293 residues long: 4-hydroxy-tetrahydrodipicolinate synthase (293 aa).

Thr-47 contacts pyruvate. Residue Tyr-135 is the Proton donor/acceptor of the active site. Lys-163 acts as the Schiff-base intermediate with substrate in catalysis. Val-205 serves as a coordination point for pyruvate.

The protein belongs to the DapA family. In terms of assembly, homotetramer; dimer of dimers.

The protein localises to the cytoplasm. The enzyme catalyses L-aspartate 4-semialdehyde + pyruvate = (2S,4S)-4-hydroxy-2,3,4,5-tetrahydrodipicolinate + H2O + H(+). Its pathway is amino-acid biosynthesis; L-lysine biosynthesis via DAP pathway; (S)-tetrahydrodipicolinate from L-aspartate: step 3/4. Catalyzes the condensation of (S)-aspartate-beta-semialdehyde [(S)-ASA] and pyruvate to 4-hydroxy-tetrahydrodipicolinate (HTPA). This is 4-hydroxy-tetrahydrodipicolinate synthase from Leptothrix cholodnii (strain ATCC 51168 / LMG 8142 / SP-6) (Leptothrix discophora (strain SP-6)).